A 1228-amino-acid polypeptide reads, in one-letter code: Apical endosomal glycoprotein (1228 aa).

Residues 1–21 (MCLPSHLLSTWVLFMAAQSLG) form the signal peptide. Residues 23-1159 (TWLPNHCRSP…GEVAAPVSVP (1137 aa)) are Extracellular-facing. The region spanning 28-49 (HCRSPIKAVCNFVCDCGDCSDE) is the LDL-receptor class A 1; truncated domain. Positions 65–223 (FTCNFEQDSC…DDVEFRDCGL (159 aa)) constitute an MAM 1 domain. An N-linked (GlcNAc...) asparagine glycan is attached at asparagine 204. In terms of domain architecture, LDL-receptor class A 2 spans 229-267 (RCPLGHHHCQNKACVEPHQLCDGEDNCGDRSDEDPLICS). 3 disulfide bridges follow: cysteine 230/cysteine 242, cysteine 237/cysteine 255, and cysteine 249/cysteine 266. The MAM 2 domain maps to 270 to 426 (MATDFETGLG…DLIMSSHCML (157 aa)). Asparagine 290 and asparagine 340 each carry an N-linked (GlcNAc...) asparagine glycan. Residues 457–492 (TCEPGHLSCGDLCVPPEQLCDFQKHCAEGEDEHKCG) enclose the LDL-receptor class A 3 domain. Disulfide bonds link cysteine 458–cysteine 469, cysteine 465–cysteine 482, and cysteine 476–cysteine 491. MAM domains follow at residues 492–649 (GTTD…DCNP), 659–815 (LSCN…PCWA), 817–975 (KSCS…PCPQ), and 977–1144 (GSCD…QCKQ). Asparagine 641 carries N-linked (GlcNAc...) asparagine glycosylation. Asparagine 841 carries an N-linked (GlcNAc...) asparagine glycan. Residues 1160–1180 (VAVGGALLFFMFLVLMGLGGW) form a helical membrane-spanning segment. The Cytoplasmic portion of the chain corresponds to 1181 to 1228 (HWLQKQHCPGQRSTDAAASGFANILFNADHVTLPESITSNPQSPPDLA).

The protein localises to the membrane. Functionally, probably involved in the sorting and selective transport of receptors and ligands across polarized epithelia. This chain is Apical endosomal glycoprotein, found in Mus musculus (Mouse).